Consider the following 502-residue polypeptide: Beta-glucosidase 7 (502 aa).

Positions M1–A22 are cleaved as a signal peptide. A beta-D-glucoside-binding positions include Q42, H140, and N185–E186. The active-site Proton donor is E186. An N-linked (GlcNAc...) asparagine glycan is attached at N208. Y325 lines the a beta-D-glucoside pocket. A glycan (N-linked (GlcNAc...) asparagine) is linked at N359. Residue E392 participates in a beta-D-glucoside binding. The active-site Nucleophile is E392. N425 carries N-linked (GlcNAc...) asparagine glycosylation. Residues W435 and Y451 each coordinate a beta-D-glucoside. N-linked (GlcNAc...) asparagine glycosylation is found at N457 and N479.

The protein belongs to the glycosyl hydrolase 1 family.

The enzyme catalyses Hydrolysis of terminal, non-reducing beta-D-glucosyl residues with release of beta-D-glucose.. In Arabidopsis thaliana (Mouse-ear cress), this protein is Beta-glucosidase 7.